Here is a 368-residue protein sequence, read N- to C-terminus: Histidinol-phosphate aminotransferase (368 aa).

An N6-(pyridoxal phosphate)lysine modification is found at K223.

It belongs to the class-II pyridoxal-phosphate-dependent aminotransferase family. Histidinol-phosphate aminotransferase subfamily. In terms of assembly, homodimer. The cofactor is pyridoxal 5'-phosphate.

The catalysed reaction is L-histidinol phosphate + 2-oxoglutarate = 3-(imidazol-4-yl)-2-oxopropyl phosphate + L-glutamate. Its pathway is amino-acid biosynthesis; L-histidine biosynthesis; L-histidine from 5-phospho-alpha-D-ribose 1-diphosphate: step 7/9. This Rhodospirillum rubrum (strain ATCC 11170 / ATH 1.1.1 / DSM 467 / LMG 4362 / NCIMB 8255 / S1) protein is Histidinol-phosphate aminotransferase.